We begin with the raw amino-acid sequence, 112 residues long: Macrodomain Ori protein (112 aa).

Positions 91–112 (FHTLSGGKPQVEGAEDYTEADD) are disordered. Residues 103 to 112 (GAEDYTEADD) show a composition bias toward acidic residues.

The protein belongs to the MaoP family.

Functionally, involved in the organization of the Ori region of the chromosome into a macrodomain (MD). It constrains DNA mobility in the Ori macrodomain and limits long-distance DNA interactions with other chromosomal regions. This is Macrodomain Ori protein from Salmonella choleraesuis (strain SC-B67).